A 647-amino-acid chain; its full sequence is Threonine--tRNA ligase (647 aa).

The TGS domain maps to M1–V63. The segment at D244–P535 is catalytic. C336, H387, and H512 together coordinate Zn(2+).

This sequence belongs to the class-II aminoacyl-tRNA synthetase family. In terms of assembly, homodimer. Zn(2+) is required as a cofactor.

The protein resides in the cytoplasm. The enzyme catalyses tRNA(Thr) + L-threonine + ATP = L-threonyl-tRNA(Thr) + AMP + diphosphate + H(+). Its function is as follows. Catalyzes the attachment of threonine to tRNA(Thr) in a two-step reaction: L-threonine is first activated by ATP to form Thr-AMP and then transferred to the acceptor end of tRNA(Thr). Also edits incorrectly charged L-seryl-tRNA(Thr). This chain is Threonine--tRNA ligase, found in Desulfovibrio desulfuricans (strain ATCC 27774 / DSM 6949 / MB).